The sequence spans 535 residues: Phosphoenolpyruvate carboxykinase (ATP) (535 aa).

3 residues coordinate substrate: arginine 59, tyrosine 201, and lysine 207. Residues lysine 207, histidine 226, and 243–251 (GLSGTGKTT) contribute to the ATP site. Mn(2+) is bound by residues lysine 207 and histidine 226. Aspartate 264 is a binding site for Mn(2+). ATP-binding positions include glutamate 292, arginine 328, 444–445 (RI), and threonine 450. Arginine 328 contributes to the substrate binding site.

It belongs to the phosphoenolpyruvate carboxykinase (ATP) family. The cofactor is Mn(2+).

The protein localises to the cytoplasm. The catalysed reaction is oxaloacetate + ATP = phosphoenolpyruvate + ADP + CO2. It participates in carbohydrate biosynthesis; gluconeogenesis. Involved in the gluconeogenesis. Catalyzes the conversion of oxaloacetate (OAA) to phosphoenolpyruvate (PEP) through direct phosphoryl transfer between the nucleoside triphosphate and OAA. In Porphyromonas gingivalis (strain ATCC 33277 / DSM 20709 / CIP 103683 / JCM 12257 / NCTC 11834 / 2561), this protein is Phosphoenolpyruvate carboxykinase (ATP).